The following is a 293-amino-acid chain: Formamidopyrimidine-DNA glycosylase (293 aa).

The active-site Schiff-base intermediate with DNA is the Pro-2. Catalysis depends on Glu-3, which acts as the Proton donor. Residue Lys-58 is the Proton donor; for beta-elimination activity of the active site. 3 residues coordinate DNA: His-104, Arg-123, and Arg-166. Residues 257-293 (AVYDREGEPCRSKGCDGVVKRFVQNGRSTFWCPKCQK) form an FPG-type zinc finger. Arg-283 (proton donor; for delta-elimination activity) is an active-site residue.

It belongs to the FPG family. As to quaternary structure, monomer. Zn(2+) is required as a cofactor.

It carries out the reaction Hydrolysis of DNA containing ring-opened 7-methylguanine residues, releasing 2,6-diamino-4-hydroxy-5-(N-methyl)formamidopyrimidine.. The catalysed reaction is 2'-deoxyribonucleotide-(2'-deoxyribose 5'-phosphate)-2'-deoxyribonucleotide-DNA = a 3'-end 2'-deoxyribonucleotide-(2,3-dehydro-2,3-deoxyribose 5'-phosphate)-DNA + a 5'-end 5'-phospho-2'-deoxyribonucleoside-DNA + H(+). Involved in base excision repair of DNA damaged by oxidation or by mutagenic agents. Acts as a DNA glycosylase that recognizes and removes damaged bases. Has a preference for oxidized purines, such as 7,8-dihydro-8-oxoguanine (8-oxoG). Has AP (apurinic/apyrimidinic) lyase activity and introduces nicks in the DNA strand. Cleaves the DNA backbone by beta-delta elimination to generate a single-strand break at the site of the removed base with both 3'- and 5'-phosphates. In Rhodopseudomonas palustris (strain BisB18), this protein is Formamidopyrimidine-DNA glycosylase.